The chain runs to 331 residues: Ribosomal RNA small subunit methyltransferase C (331 aa).

Belongs to the methyltransferase superfamily. RsmC family. In terms of assembly, monomer.

It is found in the cytoplasm. The catalysed reaction is guanosine(1207) in 16S rRNA + S-adenosyl-L-methionine = N(2)-methylguanosine(1207) in 16S rRNA + S-adenosyl-L-homocysteine + H(+). Functionally, specifically methylates the guanine in position 1207 of 16S rRNA in the 30S particle. The protein is Ribosomal RNA small subunit methyltransferase C of Pseudomonas putida (strain W619).